The sequence spans 123 residues: Holo-[acyl-carrier-protein] synthase (123 aa).

Mg(2+) contacts are provided by Asp8 and Glu60.

It belongs to the P-Pant transferase superfamily. AcpS family. It depends on Mg(2+) as a cofactor.

It localises to the cytoplasm. It carries out the reaction apo-[ACP] + CoA = holo-[ACP] + adenosine 3',5'-bisphosphate + H(+). Functionally, transfers the 4'-phosphopantetheine moiety from coenzyme A to a Ser of acyl-carrier-protein. In Ehrlichia chaffeensis (strain ATCC CRL-10679 / Arkansas), this protein is Holo-[acyl-carrier-protein] synthase.